An 87-amino-acid polypeptide reads, in one-letter code: Large ribosomal subunit protein eL20 (87 aa).

Belongs to the eukaryotic ribosomal protein eL20 family. As to quaternary structure, part of the 50S ribosomal subunit. Binds 23S rRNA.

This Staphylothermus marinus (strain ATCC 43588 / DSM 3639 / JCM 9404 / F1) protein is Large ribosomal subunit protein eL20.